The following is a 692-amino-acid chain: Elongation factor G (692 aa).

Residues Glu-8 to Leu-282 enclose the tr-type G domain. GTP-binding positions include Ala-17–Thr-24, Asp-81–His-85, and Asn-135–Asp-138.

This sequence belongs to the TRAFAC class translation factor GTPase superfamily. Classic translation factor GTPase family. EF-G/EF-2 subfamily.

The protein localises to the cytoplasm. In terms of biological role, catalyzes the GTP-dependent ribosomal translocation step during translation elongation. During this step, the ribosome changes from the pre-translocational (PRE) to the post-translocational (POST) state as the newly formed A-site-bound peptidyl-tRNA and P-site-bound deacylated tRNA move to the P and E sites, respectively. Catalyzes the coordinated movement of the two tRNA molecules, the mRNA and conformational changes in the ribosome. The polypeptide is Elongation factor G (Bacillus cereus (strain ATCC 14579 / DSM 31 / CCUG 7414 / JCM 2152 / NBRC 15305 / NCIMB 9373 / NCTC 2599 / NRRL B-3711)).